Here is a 768-residue protein sequence, read N- to C-terminus: C-type polyheme cytochrome OmcC (768 aa).

The N-terminal stretch at 1–23 is a signal peptide; that stretch reads MSRKVTKYSAVLAVSLFAAALAG. Cysteine 24 carries N-palmitoyl cysteine lipidation. The S-diacylglycerol cysteine moiety is linked to residue cysteine 24. Heme c-binding residues include cysteine 48, cysteine 51, histidine 52, cysteine 80, cysteine 83, histidine 84, cysteine 112, cysteine 115, histidine 116, cysteine 148, cysteine 151, histidine 152, cysteine 193, cysteine 196, histidine 197, cysteine 238, cysteine 241, histidine 242, cysteine 320, cysteine 323, histidine 324, cysteine 405, cysteine 408, histidine 409, cysteine 454, cysteine 457, histidine 458, cysteine 504, cysteine 507, histidine 508, cysteine 579, cysteine 582, histidine 583, cysteine 611, cysteine 614, and histidine 615.

Binds 12 heme c groups per subunit.

Its subcellular location is the cell outer membrane. Its function is as follows. Not involved in Fe(3+) reduction. This chain is C-type polyheme cytochrome OmcC (omcC), found in Geobacter sulfurreducens (strain ATCC 51573 / DSM 12127 / PCA).